A 193-amino-acid chain; its full sequence is Phosphatidylglycerophosphatase and protein-tyrosine phosphatase 1 (193 aa).

The N-terminal 31 residues, 1-31, are a transit peptide targeting the mitochondrion; the sequence is MAASAWLEAGLARVLFYPTLLYTVFRGRVGG. Positions 37–188 constitute a Tyrosine-protein phosphatase domain; the sequence is WYHRIDHTVL…LKEFHKEIAA (152 aa). N6-succinyllysine is present on Lys85. The Phosphocysteine intermediate role is filled by Cys132.

It belongs to the protein-tyrosine phosphatase family. Non-receptor class dual specificity subfamily. As to quaternary structure, interacts with STYXL1; the interaction inhibits PTPMT1 catalytic activity. Expressed in liver and in pancreatic beta cells.

The protein resides in the mitochondrion inner membrane. The enzyme catalyses O-phospho-L-tyrosyl-[protein] + H2O = L-tyrosyl-[protein] + phosphate. It carries out the reaction O-phospho-L-seryl-[protein] + H2O = L-seryl-[protein] + phosphate. It catalyses the reaction O-phospho-L-threonyl-[protein] + H2O = L-threonyl-[protein] + phosphate. The catalysed reaction is a 1,2-diacyl-sn-glycero-3-phospho-(1'-sn-glycero-3'-phosphate) + H2O = a 1,2-diacyl-sn-glycero-3-phospho-(1'-sn-glycerol) + phosphate. The enzyme catalyses 1,2-di-(9Z-octadecenoyl)-sn-glycero-3-phospho-(1'-sn-glycerol-3'-phosphate) + H2O = 1,2-di-(9Z-octadecenoyl)-sn-glycero-3-phospho-(1'-sn-glycerol) + phosphate. It carries out the reaction 1,2-dioctanoyl-sn-glycero-3-phospho-(1D-myo-inositol-5-phosphate) + H2O = 1,2-dioctanoyl-sn-glycero-3-phospho-(1D-myo-inositol) + phosphate. It catalyses the reaction a 1-acyl-2-hexanoyl-sn-glycero-3-phospho-(1D-myo-inositol-5-phosphate) + H2O = a 1-acyl-2-hexanoyl-sn-glycero-3-phospho-(1D-myo-inositol) + phosphate. The catalysed reaction is 1,2-dibutyryl-sn-glycero-3-phospho-(1D-myo-inositol-5-phosphate) + H2O = 1,2-dibutyryl-sn-glycero-3-phospho-(1D-myo-inositol) + phosphate. Its pathway is phospholipid metabolism; phosphatidylglycerol biosynthesis; phosphatidylglycerol from CDP-diacylglycerol: step 2/2. Lipid phosphatase which dephosphorylates phosphatidylglycerophosphate (PGP) to phosphatidylglycerol (PG). PGP is an essential intermediate in the biosynthetic pathway of cardiolipin, a mitochondrial-specific phospholipid regulating the membrane integrity and activities of the organelle. Has also been shown to display phosphatase activity toward phosphoprotein substrates, specifically mediates dephosphorylation of mitochondrial proteins, thereby playing an essential role in ATP production. Has probably a preference for proteins phosphorylated on Ser and/or Thr residues compared to proteins phosphorylated on Tyr residues. Probably involved in regulation of insulin secretion in pancreatic beta cells. May prevent intrinsic apoptosis, probably by regulating mitochondrial membrane integrity. The polypeptide is Phosphatidylglycerophosphatase and protein-tyrosine phosphatase 1 (Rattus norvegicus (Rat)).